Here is a 311-residue protein sequence, read N- to C-terminus: Bifunctional protein FolD (311 aa).

Residues 184–186 (GAS), Ile209, and Ile250 each bind NADP(+).

The protein belongs to the tetrahydrofolate dehydrogenase/cyclohydrolase family. In terms of assembly, homodimer.

It catalyses the reaction (6R)-5,10-methylene-5,6,7,8-tetrahydrofolate + NADP(+) = (6R)-5,10-methenyltetrahydrofolate + NADPH. The catalysed reaction is (6R)-5,10-methenyltetrahydrofolate + H2O = (6R)-10-formyltetrahydrofolate + H(+). It functions in the pathway one-carbon metabolism; tetrahydrofolate interconversion. In terms of biological role, catalyzes the oxidation of 5,10-methylenetetrahydrofolate to 5,10-methenyltetrahydrofolate and then the hydrolysis of 5,10-methenyltetrahydrofolate to 10-formyltetrahydrofolate. This is Bifunctional protein FolD from Gluconacetobacter diazotrophicus (strain ATCC 49037 / DSM 5601 / CCUG 37298 / CIP 103539 / LMG 7603 / PAl5).